Here is a 560-residue protein sequence, read N- to C-terminus: Dihydroxy-acid dehydratase (560 aa).

A Mg(2+)-binding site is contributed by aspartate 78. [2Fe-2S] cluster is bound at residue cysteine 119. Residues aspartate 120 and lysine 121 each coordinate Mg(2+). Lysine 121 bears the N6-carboxylysine mark. A [2Fe-2S] cluster-binding site is contributed by cysteine 192. Glutamate 446 is a binding site for Mg(2+). Serine 472 serves as the catalytic Proton acceptor.

The protein belongs to the IlvD/Edd family. In terms of assembly, homodimer. The cofactor is [2Fe-2S] cluster. Requires Mg(2+) as cofactor.

It carries out the reaction (2R)-2,3-dihydroxy-3-methylbutanoate = 3-methyl-2-oxobutanoate + H2O. The enzyme catalyses (2R,3R)-2,3-dihydroxy-3-methylpentanoate = (S)-3-methyl-2-oxopentanoate + H2O. It participates in amino-acid biosynthesis; L-isoleucine biosynthesis; L-isoleucine from 2-oxobutanoate: step 3/4. Its pathway is amino-acid biosynthesis; L-valine biosynthesis; L-valine from pyruvate: step 3/4. Its function is as follows. Functions in the biosynthesis of branched-chain amino acids. Catalyzes the dehydration of (2R,3R)-2,3-dihydroxy-3-methylpentanoate (2,3-dihydroxy-3-methylvalerate) into 2-oxo-3-methylpentanoate (2-oxo-3-methylvalerate) and of (2R)-2,3-dihydroxy-3-methylbutanoate (2,3-dihydroxyisovalerate) into 2-oxo-3-methylbutanoate (2-oxoisovalerate), the penultimate precursor to L-isoleucine and L-valine, respectively. This is Dihydroxy-acid dehydratase from Anaeromyxobacter sp. (strain K).